Consider the following 293-residue polypeptide: GPN-loop GTPase 3 (293 aa).

A GTP-binding site is contributed by 13 to 18 (GAGKST). The short motif at 70–72 (GPN) is the Gly-Pro-Asn (GPN)-loop; involved in dimer interface element. Residue 176–179 (SKMD) participates in GTP binding. Positions 272 to 281 (HEAQEPREPN) are enriched in basic and acidic residues. The tract at residues 272–293 (HEAQEPREPNDEQDVDYEDADI) is disordered. Acidic residues predominate over residues 282 to 293 (DEQDVDYEDADI).

The protein belongs to the GPN-loop GTPase family. In terms of assembly, heterodimers with gpn1 or gpn2. Binds to RNA polymerase II (RNAPII).

In terms of biological role, small GTPase required for proper nuclear import of RNA polymerase II and III (RNAPII and RNAPIII). May act at an RNAP assembly step prior to nuclear import. The chain is GPN-loop GTPase 3 from Aspergillus fumigatus (strain ATCC MYA-4609 / CBS 101355 / FGSC A1100 / Af293) (Neosartorya fumigata).